The following is an 801-amino-acid chain: Phenylalanine--tRNA ligase beta subunit (801 aa).

Positions 39–154 (LKMPQKVVVG…GHLELGVELG (116 aa)) constitute a tRNA-binding domain. In terms of domain architecture, B5 spans 398–475 (IDEITIKTTF…RIYGIDNVSS (78 aa)). The Mg(2+) site is built by Asp453, Asp459, Glu462, and Glu463. In terms of domain architecture, FDX-ACB spans 708 to 800 (SKYQKSTRDL…LVREFDAVLR (93 aa)).

It belongs to the phenylalanyl-tRNA synthetase beta subunit family. Type 1 subfamily. In terms of assembly, tetramer of two alpha and two beta subunits. Requires Mg(2+) as cofactor.

It is found in the cytoplasm. The catalysed reaction is tRNA(Phe) + L-phenylalanine + ATP = L-phenylalanyl-tRNA(Phe) + AMP + diphosphate + H(+). The chain is Phenylalanine--tRNA ligase beta subunit from Helicobacter hepaticus (strain ATCC 51449 / 3B1).